Here is a 345-residue protein sequence, read N- to C-terminus: MGVCGSLFLPWKCLVVVSLRLLFLVPTGVPVRSGDATFPKAMDNVTVRQGESATLRCTIDNRVTRVAWLNRSTILYAGNDKWCLDPRVVLLSNTQTQYSIEIQNVDVYDEGPYTCSVQTDNHPKTSRVHLIVQVSPKIVEISSDISINEGNNISLTCIATGRPEPTVTWRHISPKAVGFVSEDEYLEIQGITREQSGYYECSASNDVAAPVVRRVKVTVNYPPYISEAKGTGVPVGQKGTLQCEASAVPSAEFQWYKDDKRLVEGKKGVKVENRPFLSKLIFFNVSEHDYGNYTCVASNKLGHTNASITLFGPGAVSEVSNGTSSRRAGCLWLLPLLVLHLLLKF.

The N-terminal stretch at Met-1–Pro-30 is a signal peptide. Ig-like C2-type domains follow at residues Pro-39–Ser-126, Pro-136–Thr-218, and Pro-222–Thr-309. Residues Asn-44, Asn-70, and Asn-152 are each glycosylated (N-linked (GlcNAc...) asparagine). A disulfide bridge connects residues Cys-57 and Cys-115. 2 disulfides stabilise this stretch: Cys-157-Cys-201 and Cys-243-Cys-295. 4 N-linked (GlcNAc...) asparagine glycosylation sites follow: Asn-284, Asn-292, Asn-305, and Asn-321. The GPI-anchor amidated asparagine moiety is linked to residue Asn-321. A propeptide spans Gly-322–Phe-345 (removed in mature form).

This sequence belongs to the immunoglobulin superfamily. IgLON family.

It is found in the cell membrane. Its function is as follows. Neural cell adhesion molecule. The polypeptide is Neurotrimin (NTM) (Bos taurus (Bovine)).